The sequence spans 284 residues: MEMO1 family protein Mevan_0697 (284 aa).

The protein belongs to the MEMO1 family.

This Methanococcus vannielii (strain ATCC 35089 / DSM 1224 / JCM 13029 / OCM 148 / SB) protein is MEMO1 family protein Mevan_0697.